The chain runs to 276 residues: Undecaprenyl-diphosphatase (276 aa).

8 helical membrane passes run 1–21 (MELY…FLPV), 40–60 (ALSF…LVFF), 93–113 (VRLA…GLIL), 120–140 (LFSS…FLWL), 154–174 (IGFG…IPGI), 199–219 (FLLS…ESFA), 227–247 (VTLL…VALL), and 255–275 (FYLF…AGFV).

The protein belongs to the UppP family.

Its subcellular location is the cell inner membrane. It catalyses the reaction di-trans,octa-cis-undecaprenyl diphosphate + H2O = di-trans,octa-cis-undecaprenyl phosphate + phosphate + H(+). Its function is as follows. Catalyzes the dephosphorylation of undecaprenyl diphosphate (UPP). Confers resistance to bacitracin. This chain is Undecaprenyl-diphosphatase, found in Desulforapulum autotrophicum (strain ATCC 43914 / DSM 3382 / VKM B-1955 / HRM2) (Desulfobacterium autotrophicum).